The following is a 1317-amino-acid chain: Nucleoporin NUP145 (1317 aa).

Over residues 1 to 16 (MFNKSVNSGFTFGNQN) the composition is skewed to polar residues. Residues 1 to 36 (MFNKSVNSGFTFGNQNTSTPTSTPAQPSSSLQFPQK) form a disordered region. The stretch at 12–13 (FG) is one FG 1 repeat. Over residues 17–30 (TSTPTSTPAQPSSS) the composition is skewed to low complexity. A GLFG 1 repeat occupies 39–42 (GLFG). The stretch at 79-80 (FG) is one FG 2 repeat. A GLFG 2 repeat occupies 89–92 (GLFG). Residues 106–107 (FG) form an FG 3 repeat. The disordered stretch occupies residues 133–165 (QNGGLFGNSNNNNITSTTQNGGLFGKPTTTPAG). GLFG repeat units lie at residues 136–139 (GLFG), 154–157 (GLFG), 168–171 (GLFG), and 181–184 (GLFG). Low complexity predominate over residues 139–164 (GNSNNNNITSTTQNGGLFGKPTTTPA). The stretch at 193 to 196 (GIFG) is one GLFG 7; approximate repeat. Residues 206 to 209 (GLFG) form a GLFG 8 repeat. The disordered stretch occupies residues 249 to 278 (TSSLSDVNGKSDAEPKPIENRRTYSFSSSV). Residues 257 to 270 (GKSDAEPKPIENRR) are compositionally biased toward basic and acidic residues. Ser-273 bears the Phosphoserine mark. The Bipartite nuclear localization signal signature appears at 369 to 385 (RKLKIDSNRSAAKKLKL). Residues 390–450 (PAITKKHMQD…NLNKQDGENT (61 aa)) form a disordered region. The interval 398–523 (QDEQDSSENE…FGKIVIFRSS (126 aa)) is required for autocatalytic cleavage. Ser-403, Ser-404, and Ser-414 each carry phosphoserine. Over residues 418-427 (IDRKENRDNN) the composition is skewed to basic and acidic residues. The segment covering 428-444 (LDNTYLNGKEQSNNLNK) has biased composition (polar residues). The Peptidase S59 domain occupies 458 to 605 (SFGYWCSPSP…GTWTFKVNHF (148 aa)). A nucleoporin RNA-binding motif (NRM) region spans residues 460-604 (GYWCSPSPEQ…GGTWTFKVNH (145 aa)). Phosphoserine is present on residues Ser-667, Ser-679, and Ser-689. Thr-751 is subject to Phosphothreonine.

This sequence belongs to the nucleoporin GLFG family. Component of the nuclear pore complex (NPC). NPC constitutes the exclusive means of nucleocytoplasmic transport. NPCs allow the passive diffusion of ions and small molecules and the active, nuclear transport receptor-mediated bidirectional transport of macromolecules such as proteins, RNAs, ribonucleoparticles (RNPs), and ribosomal subunits across the nuclear envelope. Due to its 8-fold rotational symmetry, all subunits are present with 8 copies or multiples thereof. NUP145C is part of the heptameric 0.5 MDa autoassembling NUP84 NPC subcomplex (NUP84, NUP85, NUP120, NUP133, NUP145C, SEC13 and SEH1). NUP145N may bind homomeric RNA and interacts through its FG repeats with karyopherins. Interacts with MLP1 and MLP2. NUP145 is autocatalytically cleaved in NUP145N and NUP145C.

Its subcellular location is the nucleus. The protein localises to the nuclear pore complex. The protein resides in the nucleus membrane. Functionally, functions as a component of the nuclear pore complex (NPC). NPC components, collectively referred to as nucleoporins (NUPs), can play the role of both NPC structural components and of docking or interaction partners for transiently associated nuclear transport factors. Active directional transport is assured by both, a Phe-Gly (FG) repeat affinity gradient for these transport factors across the NPC and a transport cofactor concentration gradient across the nuclear envelope (GSP1 and GSP2 GTPases associated predominantly with GTP in the nucleus, with GDP in the cytoplasm). NUP145 is autocatalytically cleaved in vivo in 2 polypeptides which assume different functions in the NPC. NUP145N as one of the FG repeat nucleoporins participates in karyopherin interactions and contains part of the autocatalytic cleavage activity. NUP145C as part of the NUP84 complex is involved in nuclear poly(A)+ RNA and tRNA export. It is also required for normal NPC distribution (probably through interactions with MLP1 and MLP2) and NPC assembly, as well as for normal nuclear envelope organization. The sequence is that of Nucleoporin NUP145 (NUP145) from Saccharomyces cerevisiae (strain ATCC 204508 / S288c) (Baker's yeast).